The chain runs to 358 residues: Peptide chain release factor 1 (358 aa).

N5-methylglutamine is present on Gln233.

Belongs to the prokaryotic/mitochondrial release factor family. In terms of processing, methylated by PrmC. Methylation increases the termination efficiency of RF1.

It is found in the cytoplasm. In terms of biological role, peptide chain release factor 1 directs the termination of translation in response to the peptide chain termination codons UAG and UAA. This is Peptide chain release factor 1 from Blochmanniella floridana.